The sequence spans 411 residues: MFHPRARTMLLLSLPALIIGVASSLVLIASMKVASVFQQFLWQRLPASIGIAYDSPFWIVGMLTLTGIVVGLIIRYSPGHAGPDPAIEPLISMPVSPSALPGLLLALIIGLAGGVSLGPEHPIMTINIALAAAFGSRLFPRITALDWTILASAGTIGALFGTPVAAALIFSQTLSGSNDIPMWDRLFAPLMAAAAGSLTTSLFFHPHFSLPIAHYTQMRLVDIASGAIVAAIAIAAGMVAVWCLPRLHELLHRLKNPVLILGIGGFILGILGVIGGPLTLFKGLDEMQQMAFSQTLGAGDYFTLAAVKLAALVIAAASGFRGGRIFPAVFIGAALGLMLHAHVEAVPAAITVSCAILGLVLVVTRDGWLSLFMAAVVVPDTNLLPLLCIVMLPAWLLLAGKPLLAANRHEP.

The next 11 helical transmembrane spans lie at 9–29 (MLLLSLPALIIGVASSLVLIA), 54–74 (DSPFWIVGMLTLTGIVVGLII), 99–119 (ALPGLLLALIIGLAGGVSLGP), 149–169 (ILASAGTIGALFGTPVAAALI), 186–206 (LFAPLMAAAAGSLTTSLFFHP), 223–243 (IASGAIVAAIAIAAGMVAVWC), 258–278 (VLILGIGGFILGILGVIGGPL), 296–316 (LGAGDYFTLAAVKLAALVIAA), 322–342 (GGRIFPAVFIGAALGLMLHAH), 343–363 (VEAVPAAITVSCAILGLVLVV), and 386–406 (LLCIVMLPAWLLLAGKPLLAA).

Belongs to the chloride channel (TC 2.A.49) family.

It is found in the cell membrane. This is Putative ion-transport protein YfeO from Salmonella schwarzengrund (strain CVM19633).